The following is a 353-amino-acid chain: Rhodopsin (353 aa).

Residues 1-36 (MNGTEGPFFYVPMVNTTGIVRSPYDYPQYYLVSPAA) lie on the Extracellular side of the membrane. N-linked (GlcNAc...) asparagine glycosylation is found at asparagine 2 and asparagine 15. Residues 37 to 61 (YAALGAYMFLLILLGFPINFLTLYV) form a helical membrane-spanning segment. The Cytoplasmic segment spans residues 62–73 (TIEHKKLRTPLN). The helical transmembrane segment at 74 to 96 (YILLNLAVADLFMVFGGFTTTMY) threads the bilayer. Over 97–110 (TSMHGYFVLGRLGC) the chain is Extracellular. Cysteine 110 and cysteine 187 are disulfide-bonded. The chain crosses the membrane as a helical span at residues 111 to 133 (NMEGFFATLGGEIGLWSLVVLAV). Positions 134–136 (ERW) match the 'Ionic lock' involved in activated form stabilization motif. Topologically, residues 134–152 (ERWLVVCKPISNFRFGENH) are cytoplasmic. The chain crosses the membrane as a helical span at residues 153 to 173 (AIMGLAFTWVMACSCAVPPLV). Residues 174 to 202 (GWSRYIPEGMQCSCGVDYYTRAEGFNNES) are Extracellular-facing. N-linked (GlcNAc...) asparagine glycosylation occurs at asparagine 200. Residues 203 to 224 (FVIYMFACHFIIPMCVVFFCYG) traverse the membrane as a helical segment. At 225–252 (RLLCAVKEAAAAQQESETTQRAEKEVTR) the chain is on the cytoplasmic side. Residues 253-274 (MVVIMGIAFLICWCPYASVAWY) traverse the membrane as a helical segment. Residues 275–286 (IFTHQGSEFGPV) are Extracellular-facing. The chain crosses the membrane as a helical span at residues 287–308 (FMTLPAFFAKTSSVYNPLIYIL). Lysine 296 carries the post-translational modification N6-(retinylidene)lysine. At 309–353 (MNKQFRHCMITTLCCGKNPFEEEEGASTASKTEASSVSSSSVSPA) the chain is on the cytoplasmic side. S-palmitoyl cysteine attachment occurs at residues cysteine 322 and cysteine 323. Residues 331-353 (EEGASTASKTEASSVSSSSVSPA) form a disordered region. Residues 334 to 353 (ASTASKTEASSVSSSSVSPA) are compositionally biased toward low complexity.

Belongs to the G-protein coupled receptor 1 family. Opsin subfamily. In terms of processing, phosphorylated on some or all of the serine and threonine residues present in the C-terminal region. Post-translationally, contains one covalently linked retinal chromophore.

It localises to the membrane. The protein localises to the cell projection. Its subcellular location is the cilium. The protein resides in the photoreceptor outer segment. Its function is as follows. Photoreceptor required for image-forming vision at low light intensity. While most salt water fish species use retinal as chromophore, most freshwater fish use 3-dehydroretinal, or a mixture of retinal and 3-dehydroretinal. Light-induced isomerization of 11-cis to all-trans retinal triggers a conformational change that activates signaling via G-proteins. Subsequent receptor phosphorylation mediates displacement of the bound G-protein alpha subunit by arrestin and terminates signaling. This chain is Rhodopsin (rho), found in Dicentrarchus labrax (European seabass).